Consider the following 294-residue polypeptide: Cytidine deaminase (294 aa).

2 consecutive CMP/dCMP-type deaminase domains span residues 48–168 (DEDA…FGPK) and 186–294 (LEGD…VLLG). 89-91 (NME) is a binding site for substrate. Residue H102 coordinates Zn(2+). E104 functions as the Proton donor in the catalytic mechanism. Zn(2+) contacts are provided by C129 and C132.

It belongs to the cytidine and deoxycytidylate deaminase family. Homodimer. It depends on Zn(2+) as a cofactor.

It carries out the reaction cytidine + H2O + H(+) = uridine + NH4(+). The catalysed reaction is 2'-deoxycytidine + H2O + H(+) = 2'-deoxyuridine + NH4(+). Functionally, this enzyme scavenges exogenous and endogenous cytidine and 2'-deoxycytidine for UMP synthesis. The protein is Cytidine deaminase of Citrobacter koseri (strain ATCC BAA-895 / CDC 4225-83 / SGSC4696).